Consider the following 400-residue polypeptide: Pectinesterase B (400 aa).

Substrate is bound by residues T171 and Q205. D228 serves as the catalytic Proton donor. D261 functions as the Nucleophile in the catalytic mechanism. Substrate is bound by residues R325 and W327.

The protein belongs to the pectinesterase family.

It carries out the reaction [(1-&gt;4)-alpha-D-galacturonosyl methyl ester](n) + n H2O = [(1-&gt;4)-alpha-D-galacturonosyl](n) + n methanol + n H(+). Its pathway is glycan metabolism; pectin degradation; 2-dehydro-3-deoxy-D-gluconate from pectin: step 1/5. This Pectobacterium parmentieri protein is Pectinesterase B (pemB).